Consider the following 130-residue polypeptide: Small ribosomal subunit protein uS17m (130 aa).

The transit peptide at 1-20 directs the protein to the mitochondrion; sequence MSVVRSSVHARWIVGKVIGT.

It belongs to the universal ribosomal protein uS17 family. As to quaternary structure, component of the mitochondrial small ribosomal subunit (mt-SSU). Mature mammalian 55S mitochondrial ribosomes consist of a small (28S) and a large (39S) subunit. The 28S small subunit contains a 12S ribosomal RNA (12S mt-rRNA) and 30 different proteins. The 39S large subunit contains a 16S rRNA (16S mt-rRNA), a copy of mitochondrial valine transfer RNA (mt-tRNA(Val)), which plays an integral structural role, and 52 different proteins.

The protein resides in the mitochondrion. This is Small ribosomal subunit protein uS17m (MRPS17) from Homo sapiens (Human).